Reading from the N-terminus, the 471-residue chain is E3 ubiquitin-protein ligase TRIM38 (471 aa).

The RING-type zinc finger occupies 16 to 62; sequence CSICKAMMSHPVSINCGHSYCKSCIQSYYCNVSPKTGWKMLGCPLCS. Residues 90–131 form a B box-type zinc finger; sequence DQDMVCEEHEEKFNRFCEDDGQLLCWRCYWEDRHKGHTLAHV. Residues cysteine 95, histidine 98, cysteine 117, and histidine 123 each coordinate Zn(2+). The B30.2/SPRY domain occupies 276–471; sequence CNVSELYFDV…PLFLPAINNQ (196 aa).

As to quaternary structure, interacts (via B30.2/SPRY domain) with TAB2 and TAB3.

The protein localises to the cytoplasm. The enzyme catalyses S-ubiquitinyl-[E2 ubiquitin-conjugating enzyme]-L-cysteine + [acceptor protein]-L-lysine = [E2 ubiquitin-conjugating enzyme]-L-cysteine + N(6)-ubiquitinyl-[acceptor protein]-L-lysine.. It participates in protein modification; protein ubiquitination. It functions in the pathway protein modification; protein sumoylation. In terms of biological role, E3 ubiquitin-protein and E3 SUMO-protein ligase that acts as a regulator of innate immunity. Acts as a negative regulator of type I interferon IFN-beta production by catalyzing 'Lys-48'-linked polyubiquitination of AZI2/NAP1, leading to its degradation. Mediates 'Lys-48'-linked polyubiquitination and proteasomal degradation of the critical TLR adapter TICAM1, inhibiting TLR3-mediated type I interferon signaling. Acts as a positive regulator of the cGAS-STING pathway by acting as a E3 SUMO-protein ligase: mediates sumoylation of CGAS and STING, preventing their degradation and thereby activating the innate immune response to DNA virus. Also acts as a negative regulator of NF-kappa-B signaling independently of its E3 protein ligase activity by promoting lysosome-dependent degradation of TAB2 and TAB3 adapters. The protein is E3 ubiquitin-protein ligase TRIM38 of Mus musculus (Mouse).